The following is a 149-amino-acid chain: MSEENQEKQFAIQKVYTRNVSFEAPNSPEIFTQDFQPQLDVDLNVESRSLEGGVFHVVVRVTATTKMDDKTAFLCEVEQAGIFTLMGFDEGETNYLLGVQCPNTLFPYAREAVSDLVTRGGFPQLLLEPVNFEGIYADHLQKQAESTKQ.

This sequence belongs to the SecB family. In terms of assembly, homotetramer, a dimer of dimers. One homotetramer interacts with 1 SecA dimer.

The protein resides in the cytoplasm. In terms of biological role, one of the proteins required for the normal export of preproteins out of the cell cytoplasm. It is a molecular chaperone that binds to a subset of precursor proteins, maintaining them in a translocation-competent state. It also specifically binds to its receptor SecA. This chain is Protein-export protein SecB, found in Hydrogenovibrio crunogenus (strain DSM 25203 / XCL-2) (Thiomicrospira crunogena).